The sequence spans 225 residues: MMYHIPGVLSPQDVARFREQLEQAEWVDGRVTTGAQGAQVKNNQQVDTRSTLYAALQNEVLNAVNQHALFFAAALPRTLSTPLFNRYQNNETYGFHVDGAVRSHPQNGWMRTDLSATLFLSDPQSYDGGELVVNDTFGQHRVKLPAGDLVLYPSSSLHCVTPVTRGVRVASFMWIQSMIRDDKKRAMLFELDTNIQSLKSRHGESEEILSLLNLYHNLLREWSEI.

The Fe2OG dioxygenase domain occupies 78 to 177 (TLSTPLFNRY…RVASFMWIQS (100 aa)). Fe cation is bound by residues histidine 96, aspartate 98, and histidine 158. Arginine 168 is a 2-oxoglutarate binding site.

Fe(2+) is required as a cofactor. It depends on L-ascorbate as a cofactor.

The polypeptide is PKHD-type hydroxylase YbiX (Escherichia coli O7:K1 (strain IAI39 / ExPEC)).